Consider the following 284-residue polypeptide: Tropomyosin Por p 1.0101 (284 aa).

Methionine 1 bears the N-acetylmethionine mark. A disordered region spans residues 1 to 21 (MDAIKKKMQAMKLEKDDAMDR). Positions 1–280 (MDAIKKKMQA…TDELDQAFSE (280 aa)) form a coiled coil. Basic and acidic residues predominate over residues 12 to 21 (KLEKDDAMDR).

Belongs to the tropomyosin family. In terms of assembly, homodimer. Expressed in muscle (at protein level). Expressed in pincer muscles.

Functionally, tropomyosin, in association with the troponin complex, plays a central role in the calcium dependent regulation of muscle contraction. The chain is Tropomyosin Por p 1.0101 from Portunus pelagicus (Blue swimmer crab).